The chain runs to 395 residues: 1-deoxy-D-xylulose 5-phosphate reductoisomerase (395 aa).

NADPH contacts are provided by T15, G16, S17, I18, G41, N43, and N126. K127 serves as a coordination point for 1-deoxy-D-xylulose 5-phosphate. E128 contributes to the NADPH binding site. D152 contributes to the Mn(2+) binding site. Residues S153, E154, S178, and H201 each contribute to the 1-deoxy-D-xylulose 5-phosphate site. E154 lines the Mn(2+) pocket. Residue G207 coordinates NADPH. Residues S214, N219, K220, and E223 each coordinate 1-deoxy-D-xylulose 5-phosphate. Residue E223 participates in Mn(2+) binding.

It belongs to the DXR family. It depends on Mg(2+) as a cofactor. Requires Mn(2+) as cofactor.

The catalysed reaction is 2-C-methyl-D-erythritol 4-phosphate + NADP(+) = 1-deoxy-D-xylulose 5-phosphate + NADPH + H(+). It participates in isoprenoid biosynthesis; isopentenyl diphosphate biosynthesis via DXP pathway; isopentenyl diphosphate from 1-deoxy-D-xylulose 5-phosphate: step 1/6. In terms of biological role, catalyzes the NADPH-dependent rearrangement and reduction of 1-deoxy-D-xylulose-5-phosphate (DXP) to 2-C-methyl-D-erythritol 4-phosphate (MEP). The polypeptide is 1-deoxy-D-xylulose 5-phosphate reductoisomerase (Ruegeria sp. (strain TM1040) (Silicibacter sp.)).